The primary structure comprises 348 residues: Inosamine-phosphate amidinotransferase 1 (348 aa).

Catalysis depends on residues aspartate 179 and histidine 227. Residue cysteine 332 is the Amidino-cysteine intermediate of the active site.

Belongs to the amidinotransferase family. As to quaternary structure, homodimer.

The enzyme catalyses 1-amino-1-deoxy-scyllo-inositol 4-phosphate + L-arginine = 1-guanidino-1-deoxy-scyllo-inositol 4-phosphate + L-ornithine. The protein operates within antibiotic biosynthesis; streptomycin biosynthesis. Functionally, catalyzes two non-consecutive transamidination reactions. It converts scyllo-inosamine 4-phosphate into N-amidino-scyllo-inosamine 4-phosphate and N1-amidinostreptamine 6-phosphate into streptidine 6-phosphate. The sequence is that of Inosamine-phosphate amidinotransferase 1 (strB1) from Streptomyces glaucescens.